A 578-amino-acid chain; its full sequence is Arginine--tRNA ligase (578 aa).

Positions 123–133 match the 'HIGH' region motif; sequence PNLAKEMHVGH.

The protein belongs to the class-I aminoacyl-tRNA synthetase family. As to quaternary structure, monomer.

It is found in the cytoplasm. It carries out the reaction tRNA(Arg) + L-arginine + ATP = L-arginyl-tRNA(Arg) + AMP + diphosphate. In Hahella chejuensis (strain KCTC 2396), this protein is Arginine--tRNA ligase.